The primary structure comprises 415 residues: 4-hydroxy-3-methylbut-2-en-1-yl diphosphate synthase (flavodoxin) (415 aa).

4 residues coordinate [4Fe-4S] cluster: Cys298, Cys301, Cys344, and Glu351.

It belongs to the IspG family. [4Fe-4S] cluster serves as cofactor.

The enzyme catalyses (2E)-4-hydroxy-3-methylbut-2-enyl diphosphate + oxidized [flavodoxin] + H2O + 2 H(+) = 2-C-methyl-D-erythritol 2,4-cyclic diphosphate + reduced [flavodoxin]. It participates in isoprenoid biosynthesis; isopentenyl diphosphate biosynthesis via DXP pathway; isopentenyl diphosphate from 1-deoxy-D-xylulose 5-phosphate: step 5/6. Converts 2C-methyl-D-erythritol 2,4-cyclodiphosphate (ME-2,4cPP) into 1-hydroxy-2-methyl-2-(E)-butenyl 4-diphosphate. In Solibacter usitatus (strain Ellin6076), this protein is 4-hydroxy-3-methylbut-2-en-1-yl diphosphate synthase (flavodoxin).